The sequence spans 217 residues: Uracil-DNA glycosylase (217 aa).

The active-site Proton acceptor is the Asp-62.

Belongs to the uracil-DNA glycosylase (UDG) superfamily. UNG family.

The protein resides in the cytoplasm. It carries out the reaction Hydrolyzes single-stranded DNA or mismatched double-stranded DNA and polynucleotides, releasing free uracil.. In terms of biological role, excises uracil residues from the DNA which can arise as a result of misincorporation of dUMP residues by DNA polymerase or due to deamination of cytosine. In Streptococcus equi subsp. zooepidemicus (strain MGCS10565), this protein is Uracil-DNA glycosylase.